Here is a 199-residue protein sequence, read N- to C-terminus: Recombination protein RecR (199 aa).

A C4-type zinc finger spans residues Cys57–Cys72. The Toprim domain maps to Ser80 to Ala176.

This sequence belongs to the RecR family.

Its function is as follows. May play a role in DNA repair. It seems to be involved in an RecBC-independent recombinational process of DNA repair. It may act with RecF and RecO. This Streptococcus mutans serotype c (strain ATCC 700610 / UA159) protein is Recombination protein RecR.